The sequence spans 356 residues: Protein RecA (356 aa).

75 to 82 is a binding site for ATP; sequence GPESSGKT.

It belongs to the RecA family.

Its subcellular location is the cytoplasm. Can catalyze the hydrolysis of ATP in the presence of single-stranded DNA, the ATP-dependent uptake of single-stranded DNA by duplex DNA, and the ATP-dependent hybridization of homologous single-stranded DNAs. It interacts with LexA causing its activation and leading to its autocatalytic cleavage. This is Protein RecA from Burkholderia mallei (strain ATCC 23344).